Here is a 485-residue protein sequence, read N- to C-terminus: Glutamyl-tRNA(Gln) amidotransferase subunit A (485 aa).

Catalysis depends on charge relay system residues Lys-75 and Ser-150. Residue Ser-174 is the Acyl-ester intermediate of the active site.

The protein belongs to the amidase family. GatA subfamily. Heterotrimer of A, B and C subunits.

The enzyme catalyses L-glutamyl-tRNA(Gln) + L-glutamine + ATP + H2O = L-glutaminyl-tRNA(Gln) + L-glutamate + ADP + phosphate + H(+). In terms of biological role, allows the formation of correctly charged Gln-tRNA(Gln) through the transamidation of misacylated Glu-tRNA(Gln) in organisms which lack glutaminyl-tRNA synthetase. The reaction takes place in the presence of glutamine and ATP through an activated gamma-phospho-Glu-tRNA(Gln). The chain is Glutamyl-tRNA(Gln) amidotransferase subunit A from Picosynechococcus sp. (strain ATCC 27264 / PCC 7002 / PR-6) (Agmenellum quadruplicatum).